Reading from the N-terminus, the 508-residue chain is Zinc finger CCCH-type with G patch domain-containing protein (508 aa).

Positions 67–86 (QQESSHHDSGTPETDTKTSV) are disordered. Residues 69–86 (ESSHHDSGTPETDTKTSV) show a composition bias toward basic and acidic residues. The C3H1-type zinc-finger motif lies at 161–188 (RSMVPCPYFLEGKCKFAGAECRFSHGYL). The interval 253–282 (IYPLGPEEVESDSESDSQSDTGDSSSSKAA) is disordered. Positions 259–269 (EEVESDSESDS) are enriched in acidic residues. A compositionally biased stretch (low complexity) spans 270–279 (QSDTGDSSSS). A G-patch domain is found at 310–356 (TKGIGSKLMAKMGYIFGKGLGKDGEGRVEPIEVVVLPQGKSLDKCAE). Residues 404–426 (SLHDLRVSHPGAKPDIRKTRKSA) are disordered.

It localises to the nucleus. Transcription repressor. This chain is Zinc finger CCCH-type with G patch domain-containing protein, found in Nematostella vectensis (Starlet sea anemone).